The following is a 495-amino-acid chain: MRGDSFIWSLATAIPLLSTAVESLQVVKRDNPSVLGFDIERFQVAKPIHRDIIAKRASTKTISQDLDNQKNLYFCNLTLGTPPQTIRAHIDTGSSDLWVNTAESRFCSSRRAPCSQGGTYDSSSSSTYQLVNNDFNISYVDGSGATGDYVTDVINVGGIKLKDFQFAIGHTSSSPLGVLGIGYEAGEAQVTRSGDQSYPNLPAALVKAGHIRSNAYSLWLNDLSASRGQILFGGIDTGKFQGKLQTVPVLHTSRGDYTSLVVALTGVGIRTGSDGSIDTFPSQPVAVAMDSGSSLSYLPDALAAKVYNSVDAVFDPANNLAFVPCSMANDKRKLVFTFSSPQIAVGMDELVIDLGPDANGNEATFRDGSKACVFGIAPAGSSISILGDTVLRSAYLVYDLDNNEISIAPTRFNSTETNILEIGTGENSVPDATGVPNAVTSAQVTQATGLPGVETGVPGSRPPSSKAAGQAKRPDFVLGVAAVGLAGAGMLFAAM.

The first 19 residues, 1-19 (MRGDSFIWSLATAIPLLST), serve as a signal peptide directing secretion. Residues 73-408 (YFCNLTLGTP…DLDNNEISIA (336 aa)) enclose the Peptidase A1 domain. Residue Asn-76 is glycosylated (N-linked (GlcNAc...) asparagine). Residue Asp-91 is part of the active site. An N-linked (GlcNAc...) asparagine glycan is attached at Asn-136. The active site involves Asp-290. Asn-413 carries an N-linked (GlcNAc...) asparagine glycan. The disordered stretch occupies residues 447-470 (ATGLPGVETGVPGSRPPSSKAAGQ). Residue Ala-467 is the site of GPI-anchor amidated alanine attachment. Residues 468–495 (AGQAKRPDFVLGVAAVGLAGAGMLFAAM) constitute a propeptide, removed in mature form.

The protein belongs to the peptidase A1 family.

The protein localises to the cell membrane. Its function is as follows. Probable GPI-anchored aspartic-type endopeptidase which contributes to virulence. The protein is Probable aspartic-type endopeptidase OPSB (OPSB) of Arthroderma benhamiae (strain ATCC MYA-4681 / CBS 112371) (Trichophyton mentagrophytes).